Reading from the N-terminus, the 461-residue chain is Elongation factor 1-alpha (461 aa).

Gly2 is subject to N,N,N-trimethylglycine. The residue at position 3 (Lys3) is an N6,N6-dimethyllysine; alternate. Lys3 carries the post-translational modification N6-methyllysine; alternate. Residues Lys6–Thr241 enclose the tr-type G domain. The G1 stretch occupies residues Gly15–Ser22. Gly15–Ser22 is a binding site for GTP. Lys31 carries the post-translational modification N6-methyllysine. Residues Gly71–Asp75 form a G2 region. Lys80 is subject to N6,N6,N6-trimethyllysine. The segment at Asp92–Gly95 is G3. GTP contacts are provided by residues Asp92 to His96 and Asn154 to Asp157. The interval Asn154–Asp157 is G4. The interval Ser193–Phe195 is G5. Position 317 is an N6,N6-dimethyllysine; alternate (Lys317). Lys317 bears the N6-methyllysine; alternate mark. At Lys391 the chain carries N6-methyllysine.

Belongs to the TRAFAC class translation factor GTPase superfamily. Classic translation factor GTPase family. EF-Tu/EF-1A subfamily.

It localises to the cytoplasm. This protein promotes the GTP-dependent binding of aminoacyl-tRNA to the A-site of ribosomes during protein biosynthesis. The protein is Elongation factor 1-alpha (TEF) of Pseudoechria curvicolla (Podospora curvicolla).